Reading from the N-terminus, the 590-residue chain is Ovarian abundant message protein (590 aa).

Positions 1–71 (MQGTDNAPPG…SPGQPLVEEQ (71 aa)) are disordered. The span at 18–29 (SPRRIRHVRRHY) shows a compositional bias: basic residues. Tandem repeats lie at residues 66-71 (PLVEEQ), 72-77 (PLVEER), 78-83 (PPVEEQ), 84-89 (PLVEEQ), 90-95 (PLVEEQ), 96-101 (PLVEEQ), 102-107 (PLVEEQ), 108-113 (PLVEGQ), 114-119 (PLVEEQ), 120-125 (PLVEGQ), 126-131 (PPVEGQ), 132-137 (PLVEEQ), 138-143 (PLVEGQ), 144-149 (PLVEGQ), 150-155 (PLVEGQ), 156-161 (PLVEGQ), 162-167 (PLVGGQ), 168-173 (PLVGGQ), 174-179 (PLVEGQ), 180-185 (PLVEGQ), 300-305 (PLAGAP), 306-311 (PLAGVP), 312-317 (PLAVAL), 318-323 (PLAGAP), 324-329 (PLAGVP), 330-335 (PLAGAP), and 336-341 (PLAGAL). The tract at residues 66 to 185 (PLVEEQPLVE…VEGQPLVEGQ (120 aa)) is 20 X 6 AA tandem repeats of P-[LP]-V-[EG]-[EG]-[QR]. Residues 300–347 (PLAGAPPLAGVPPLAVALPLAGAPPLAGVPPLAGAPPLAGALPRAGVL) form an 8 X 6 AA approximate tandem repeats of P-L-A-[GV]-[AV]-[PL] region. The 2-8; approximate repeat unit spans residues 342–347 (PRAGVL). 16 repeat units span residues 348-353 (RRAGVL), 354-359 (RRAGVL), 360-365 (RRAGVL), 366-371 (RRAGVL), 372-377 (RRAGVL), 378-383 (RRAGVL), 384-389 (RRAGVL), 390-395 (RRAGVL), 396-401 (RRAGVL), 402-407 (RRADVL), 408-413 (RRADVV), 419-424 (QQLADV), 425-430 (QRLADV), 431-436 (QRLADV), 437-442 (QRLADV), and 443-448 (QRLADV). The interval 348–413 (RRAGVLRRAG…ADVLRRADVV (66 aa)) is 11 X 6 AA tandem repeats of approximate R-R-A-[GD]-V-[LV]. Positions 419–454 (QQLADVQRLADVQRLADVQRLADVQRLADVQRLVCV) are 6 X 6 AA approximate tandem repeats of Q-[QR]-L-A-D-V. The stretch at 449-454 (QRLVCV) is one 4-6; approximate repeat.

As to expression, somatic ovarian tissue.

The chain is Ovarian abundant message protein (OAM) from Ascaris suum (Pig roundworm).